A 476-amino-acid chain; its full sequence is Aspartyl/glutamyl-tRNA(Asn/Gln) amidotransferase subunit B (476 aa).

The protein belongs to the GatB/GatE family. GatB subfamily. Heterotrimer of A, B and C subunits.

The enzyme catalyses L-glutamyl-tRNA(Gln) + L-glutamine + ATP + H2O = L-glutaminyl-tRNA(Gln) + L-glutamate + ADP + phosphate + H(+). The catalysed reaction is L-aspartyl-tRNA(Asn) + L-glutamine + ATP + H2O = L-asparaginyl-tRNA(Asn) + L-glutamate + ADP + phosphate + 2 H(+). Functionally, allows the formation of correctly charged Asn-tRNA(Asn) or Gln-tRNA(Gln) through the transamidation of misacylated Asp-tRNA(Asn) or Glu-tRNA(Gln) in organisms which lack either or both of asparaginyl-tRNA or glutaminyl-tRNA synthetases. The reaction takes place in the presence of glutamine and ATP through an activated phospho-Asp-tRNA(Asn) or phospho-Glu-tRNA(Gln). The polypeptide is Aspartyl/glutamyl-tRNA(Asn/Gln) amidotransferase subunit B (Listeria innocua serovar 6a (strain ATCC BAA-680 / CLIP 11262)).